The chain runs to 301 residues: tRNA-cytidine(32) 2-sulfurtransferase (301 aa).

The PP-loop motif motif lies at S47 to S52. [4Fe-4S] cluster is bound by residues C122, C125, and C213.

Belongs to the TtcA family. As to quaternary structure, homodimer. The cofactor is Mg(2+). [4Fe-4S] cluster is required as a cofactor.

The protein localises to the cytoplasm. The catalysed reaction is cytidine(32) in tRNA + S-sulfanyl-L-cysteinyl-[cysteine desulfurase] + AH2 + ATP = 2-thiocytidine(32) in tRNA + L-cysteinyl-[cysteine desulfurase] + A + AMP + diphosphate + H(+). Its pathway is tRNA modification. Its function is as follows. Catalyzes the ATP-dependent 2-thiolation of cytidine in position 32 of tRNA, to form 2-thiocytidine (s(2)C32). The sulfur atoms are provided by the cysteine/cysteine desulfurase (IscS) system. In Photobacterium profundum (strain SS9), this protein is tRNA-cytidine(32) 2-sulfurtransferase.